Here is a 263-residue protein sequence, read N- to C-terminus: uncharacterized protein (263 aa).

One can recognise an ABC transporter domain in the interval 12–247; sequence LETQNLAIGY…ENLAKIYRTS (236 aa). 44–51 is an ATP binding site; sequence GANGAGKS.

Belongs to the ABC transporter superfamily.

This is an uncharacterized protein from Haemophilus influenzae (strain ATCC 51907 / DSM 11121 / KW20 / Rd).